The primary structure comprises 908 residues: UPF0182 protein Csac_0864 (908 aa).

A run of 7 helical transmembrane segments spans residues 22 to 42 (FVIS…DLFL), 62 to 82 (FYVK…VFFV), 98 to 118 (ISLL…ALIA), 166 to 186 (FLFY…IVLY), 208 to 228 (HIFF…KYEM), 253 to 273 (YFRL…YFFI), and 286 to 306 (SYIG…YFVV).

Belongs to the UPF0182 family.

It localises to the cell membrane. The chain is UPF0182 protein Csac_0864 from Caldicellulosiruptor saccharolyticus (strain ATCC 43494 / DSM 8903 / Tp8T 6331).